The chain runs to 264 residues: 5'-nucleotidase SurE (264 aa).

A divalent metal cation-binding residues include D12, D13, S43, and N98.

Belongs to the SurE nucleotidase family. A divalent metal cation is required as a cofactor.

The protein resides in the cytoplasm. The catalysed reaction is a ribonucleoside 5'-phosphate + H2O = a ribonucleoside + phosphate. In terms of biological role, nucleotidase that shows phosphatase activity on nucleoside 5'-monophosphates. The sequence is that of 5'-nucleotidase SurE from Sulfurovum sp. (strain NBC37-1).